The sequence spans 555 residues: MLTKPGKKLDSSESTHHTTSSNYPPLDIVHQTPQPRKEMQQKPLFDPKKMDNLIKPEPAGFTNHHRPNPSPKIPSSPGSNMTESQSNLNTKPNNNNSNNNSNMSSRSNSIESTSSNPSKPHTGGDIRWDAVNTLTSKGVQLGISDFRLLKRLGYGDIGSVYLVELRGTITYFAMKVMDKASLASRNKLLRAQTEREILSQLDHPFLPTLYSHFETDKFYCLVMEFCGGGNLYSLRQKQPNKCFTEDAARFFASEVLLALEYLHMLGIVYRDLKPENVLVRDDGHIMLSDFDLSLRCSVSPTLVKSSSVHAAGGGSGSSRPVGLIDEDAAVQGCIQPSTFFPRILQSSKKNRKAKSDFGLFVNGSMPELMAEPTNVKSMSFVGTHEYLAPEIIRGEGHGSAVDWWTFGIFIYELLYGATPFKGQGNRATLHNVIGQALRFPEVPHVSSAARDLIKGLLVKEPQKRIAYKRGATEIKQHPFFEGVNWALIRSATPPHVPEPVDFSCYASKDKESMAAVDGGGKKNNNGAGGGCSTGGGDNKPNGDCNDPDYIDFEYF.

The tract at residues 1–126 (MLTKPGKKLD…PSKPHTGGDI (126 aa)) is disordered. Composition is skewed to basic and acidic residues over residues 7–16 (KKLDSSESTH) and 35–54 (PRKE…DNLI). The segment covering 84–118 (SQSNLNTKPNNNNSNNNSNMSSRSNSIESTSSNPS) has biased composition (low complexity). Residues 146–480 (FRLLKRLGYG…ATEIKQHPFF (335 aa)) enclose the Protein kinase domain. Residues 152–160 (LGYGDIGSV) and Lys-175 each bind ATP. The active-site Proton acceptor is Asp-271. The AGC-kinase C-terminal domain occupies 481 to 555 (EGVNWALIRS…DPDYIDFEYF (75 aa)). Residues 514–547 (AAVDGGGKKNNNGAGGGCSTGGGDNKPNGDCNDP) form a disordered region. The span at 526–537 (GAGGGCSTGGGD) shows a compositional bias: gly residues.

The protein belongs to the protein kinase superfamily. AGC Ser/Thr protein kinase family. As to quaternary structure, interacts with PDPK1/PDK1. In terms of processing, autophosphorylated and phosphorylated by PDPK1/PDK1. Specifically expressed in pollen grains.

The protein resides in the cytoplasm. It carries out the reaction L-seryl-[protein] + ATP = O-phospho-L-seryl-[protein] + ADP + H(+). The catalysed reaction is L-threonyl-[protein] + ATP = O-phospho-L-threonyl-[protein] + ADP + H(+). Activated by PDPK1/PDK1. Its function is as follows. Functions redudantly with AGC1-5 as signaling component in the pollen tube. Required for polarized growth of pollen tubes. The chain is Serine/threonine-protein kinase AGC1-7 from Arabidopsis thaliana (Mouse-ear cress).